The chain runs to 420 residues: Methyltransferase/ribosomally synthesized cyclic peptide gymnopeptides precursor gymMA1 (420 aa).

Residues Met1 to Lys251 form a methyltransferase domain region. Catalysis depends on residues Arg72, Tyr76, and Tyr98. S-adenosyl-L-methionine contacts are provided by Tyr98, His100, Val103, Ala130, Gln172, Ala213, Ser244, and Thr245. The clasp domain stretch occupies residues Glu252–Met378. Positions Pro379–Pro392 are precursor leader. N-methylvaline is present on residues Val394 and Val396. Residue Gly398 is modified to N-methylglycine. An N-methylvaline modification is found at Val399. Ala400 carries the N-methylalanine modification. Gly402 is subject to N-methylglycine. Residues Val404, Val406, Val408, and Val410 each carry the N-methylvaline modification.

This sequence in the N-terminal section; belongs to the precorrin methyltransferase family. As to quaternary structure, homodimer. In terms of processing, gymMA1 automethylates at Val-394, Val-396, Gly-398, Val-399, Ala-400, Gly-402, Val-404, Val-406, Val-408 and Val-410 before being processed by a prolyloligopeptidase which likely forms a peptidyl ester upon removal of the follower propeptide, which then undergoes macrocyclization with the N-terminus of the modified core peptide. Peptide backbone alpha-N-methylations change the physicochemical properties of amide bonds to provide structural constraints and other favorable characteristics including biological membrane permeability to peptides.

It participates in mycotoxin biosynthesis. Fusion protein of the methyltransferase gymM1 and the gymnopeptides precursor; part of the gene cluster that mediates the biosynthesis of gymnopeptides, highly methylated cyclic octadecapeptides with striking antiproliferative activity on several human cancer cell lines. Gymnopeptides derive from the C-terminus of the gymMA1 protein, and it is the gymMA1 protein that methylates its own C-terminus using S-adenosyl methionine (SAM). The C-terminus is subsequently cleaved off and macrocyclized by a prolyloligopeptidase to give the final product. This is Methyltransferase/ribosomally synthesized cyclic peptide gymnopeptides precursor gymMA1 from Gymnopus fusipes (Spindle toughshank).